The following is a 717-amino-acid chain: F-box only protein 42 (717 aa).

Positions 1–30 (MASSSDSEDDSFMAVDQEETVLEGTMDQDE) are enriched in acidic residues. Positions 1 to 34 (MASSSDSEDDSFMAVDQEETVLEGTMDQDEEPHP) are disordered. The F-box domain maps to 44–93 (NRSMSELPEEVLEYILSFLSPYQEHKTAALVCKQWYRLIKGVAHQCYHGF). Kelch repeat units follow at residues 132–184 (SMYV…VYKD), 186–242 (LVLF…VIDD), 244–293 (MIVF…VIDD), and 295–342 (TILI…LWCH). The tract at residues 361–474 (RAPLSPSLNS…PSTPSAPEGY (114 aa)) is disordered. The span at 363–376 (PLSPSLNSRPSPIS) shows a compositional bias: low complexity. A phosphoserine mark is found at Ser365 and Ser373. Thr378 bears the Phosphothreonine mark. Polar residues-rich tracts occupy residues 416-426 (QRQTPSGSREG) and 455-469 (SLDS…STPS). At Ser552 the chain carries Phosphoserine. Over residues 570 to 596 (GPSASAALSPPLGSSPGSPGSQSLSSG) the composition is skewed to low complexity. Residues 570 to 631 (GPSASAALSP…GHHPPQSLNV (62 aa)) form a disordered region.

Component of some SCF complex, composed of CUL1, SKP1, RBX1 and FBXO42. Interacts (via the kelch domain) with p53/TP53; interaction is direct.

Its function is as follows. Substrate-recognition component of some SCF (SKP1-CUL1-F-box protein)-type E3 ubiquitin ligase complex. Specifically recognizes p53/TP53, promoting its ubiquitination and degradation. The chain is F-box only protein 42 (FBXO42) from Homo sapiens (Human).